We begin with the raw amino-acid sequence, 445 residues long: Argininosuccinate synthase (445 aa).

ATP contacts are provided by residues 17 to 25 (AFSGGLDTS) and A43. Y99 provides a ligand contact to L-citrulline. ATP contacts are provided by G129 and T131. 3 residues coordinate L-aspartate: T131, N135, and D136. N135 contributes to the L-citrulline binding site. Position 136 (D136) interacts with ATP. R139 and S192 together coordinate L-citrulline. Residue D194 coordinates ATP. 3 residues coordinate L-citrulline: T201, E203, and E280.

It belongs to the argininosuccinate synthase family. Type 2 subfamily. Homotetramer.

Its subcellular location is the cytoplasm. The catalysed reaction is L-citrulline + L-aspartate + ATP = 2-(N(omega)-L-arginino)succinate + AMP + diphosphate + H(+). It participates in amino-acid biosynthesis; L-arginine biosynthesis; L-arginine from L-ornithine and carbamoyl phosphate: step 2/3. The sequence is that of Argininosuccinate synthase from Acidobacterium capsulatum (strain ATCC 51196 / DSM 11244 / BCRC 80197 / JCM 7670 / NBRC 15755 / NCIMB 13165 / 161).